The chain runs to 342 residues: N-acetyl-gamma-glutamyl-phosphate reductase (342 aa).

Cysteine 147 is an active-site residue.

The protein belongs to the NAGSA dehydrogenase family. Type 1 subfamily.

The protein localises to the cytoplasm. The catalysed reaction is N-acetyl-L-glutamate 5-semialdehyde + phosphate + NADP(+) = N-acetyl-L-glutamyl 5-phosphate + NADPH + H(+). Its pathway is amino-acid biosynthesis; L-arginine biosynthesis; N(2)-acetyl-L-ornithine from L-glutamate: step 3/4. Its function is as follows. Catalyzes the NADPH-dependent reduction of N-acetyl-5-glutamyl phosphate to yield N-acetyl-L-glutamate 5-semialdehyde. This Campylobacter jejuni (strain RM1221) protein is N-acetyl-gamma-glutamyl-phosphate reductase.